The primary structure comprises 262 residues: DNA-directed RNA polymerase subunit Rpo3 (262 aa).

Belongs to the archaeal Rpo3/eukaryotic RPB3 RNA polymerase subunit family. As to quaternary structure, part of the RNA polymerase complex.

Its subcellular location is the cytoplasm. It catalyses the reaction RNA(n) + a ribonucleoside 5'-triphosphate = RNA(n+1) + diphosphate. In terms of biological role, DNA-dependent RNA polymerase (RNAP) catalyzes the transcription of DNA into RNA using the four ribonucleoside triphosphates as substrates. The protein is DNA-directed RNA polymerase subunit Rpo3 of Pyrobaculum neutrophilum (strain DSM 2338 / JCM 9278 / NBRC 100436 / V24Sta) (Thermoproteus neutrophilus).